The following is a 136-amino-acid chain: DNA-directed RNA polymerase subunit omega (136 aa).

Belongs to the RNA polymerase subunit omega family. As to quaternary structure, the RNAP catalytic core consists of 2 alpha, 1 beta, 1 beta' and 1 omega subunit. When a sigma factor is associated with the core the holoenzyme is formed, which can initiate transcription.

It carries out the reaction RNA(n) + a ribonucleoside 5'-triphosphate = RNA(n+1) + diphosphate. Functionally, promotes RNA polymerase assembly. Latches the N- and C-terminal regions of the beta' subunit thereby facilitating its interaction with the beta and alpha subunits. The protein is DNA-directed RNA polymerase subunit omega of Acidiphilium cryptum (strain JF-5).